Reading from the N-terminus, the 148-residue chain is MGFLNGYFLWVKAFHVIAVISWMAALFYLPRLFVYHAENAHKKEFVGVVQIQEKKLYSFIASPAMGFTLITGILMLLIEPTLFKSGGWLHAKLALVVLLLAYHFYCKKCMRELEKDPTRRNARFYRVFNEAPTILMILIVILVVVKPF.

Transmembrane regions (helical) follow at residues 7-27, 58-78, 86-106, and 128-148; these read YFLW…AALF, SFIA…MLLI, GGWL…HFYC, and FNEA…VKPF. His15 is a binding site for heme. Lys92 is a binding site for heme.

This sequence belongs to the HemJ family. Homodimer. The cofactor is heme b.

The protein resides in the cell membrane. It carries out the reaction protoporphyrinogen IX + 3 A = protoporphyrin IX + 3 AH2. It functions in the pathway porphyrin-containing compound metabolism; protoporphyrin-IX biosynthesis; protoporphyrin-IX from protoporphyrinogen-IX: step 1/1. In terms of biological role, catalyzes the oxidation of protoporphyrinogen IX to protoporphyrin IX. Is involved in the biosynthesis of tetrapyrrole molecules like heme. Does not use oxygen or artificial electron acceptors such as menadione or benzoquinone. This Helicobacter pylori (strain ATCC 700392 / 26695) (Campylobacter pylori) protein is Protoporphyrinogen IX oxidase.